Reading from the N-terminus, the 451-residue chain is Uronate isomerase (451 aa).

It belongs to the metallo-dependent hydrolases superfamily. Uronate isomerase family.

The catalysed reaction is D-glucuronate = D-fructuronate. It carries out the reaction aldehydo-D-galacturonate = keto-D-tagaturonate. The protein operates within carbohydrate metabolism; pentose and glucuronate interconversion. This Thermotoga sp. (strain RQ2) protein is Uronate isomerase.